The primary structure comprises 196 residues: Putative HTH-type transcriptional regulator in exeN 3'region (196 aa).

One can recognise an HTH luxR-type domain in the interval 120-185 (ASVGGDRLTR…ELFNLFLNHL (66 aa)). Positions 144 to 163 (TEAIAAALGIGNGTVKNHRK) form a DNA-binding region, H-T-H motif.

The protein is Putative HTH-type transcriptional regulator in exeN 3'region of Aeromonas salmonicida.